We begin with the raw amino-acid sequence, 93 residues long: Cell division protein FtsB (93 aa).

Topologically, residues methionine 1–leucine 3 are cytoplasmic. Residues phenylalanine 4 to phenylalanine 21 form a helical membrane-spanning segment. Residues glycine 22–arginine 93 are Periplasmic-facing. Positions aspartate 28–glutamate 76 form a coiled coil.

Belongs to the FtsB family. Part of a complex composed of FtsB, FtsL and FtsQ.

Its subcellular location is the cell inner membrane. Essential cell division protein. May link together the upstream cell division proteins, which are predominantly cytoplasmic, with the downstream cell division proteins, which are predominantly periplasmic. This Histophilus somni (strain 129Pt) (Haemophilus somnus) protein is Cell division protein FtsB.